Here is a 143-residue protein sequence, read N- to C-terminus: Ribosome maturation factor RimP (143 aa).

Belongs to the RimP family.

The protein localises to the cytoplasm. Its function is as follows. Required for maturation of 30S ribosomal subunits. This chain is Ribosome maturation factor RimP, found in Borrelia recurrentis (strain A1).